Here is a 206-residue protein sequence, read N- to C-terminus: Large ribosomal subunit protein uL13 (206 aa).

The protein belongs to the universal ribosomal protein uL13 family.

The sequence is that of Large ribosomal subunit protein uL13 (RPL13A) from Picea mariana (Black spruce).